Here is a 115-residue protein sequence, read N- to C-terminus: NADH-ubiquinone oxidoreductase chain 3 (115 aa).

A run of 3 helical transmembrane segments spans residues 3–23 (LLIIITINITLSFILISIAFW), 55–75 (FFLVAITFLLFDLEIALLLPL), and 86–106 (TMMATAFILVTILALGLSYEW).

This sequence belongs to the complex I subunit 3 family. Core subunit of respiratory chain NADH dehydrogenase (Complex I) which is composed of 45 different subunits. Interacts with TMEM186. Interacts with TMEM242.

The protein localises to the mitochondrion inner membrane. It carries out the reaction a ubiquinone + NADH + 5 H(+)(in) = a ubiquinol + NAD(+) + 4 H(+)(out). Its function is as follows. Core subunit of the mitochondrial membrane respiratory chain NADH dehydrogenase (Complex I) which catalyzes electron transfer from NADH through the respiratory chain, using ubiquinone as an electron acceptor. Essential for the catalytic activity of complex I. This Rattus norvegicus (Rat) protein is NADH-ubiquinone oxidoreductase chain 3.